Reading from the N-terminus, the 327-residue chain is Protoheme IX farnesyltransferase (327 aa).

A run of 7 helical transmembrane segments spans residues 55–75 (LVCT…LNCL), 101–121 (AAFV…VSGV), 124–144 (LAAG…TALL), 152–172 (IVVG…AATG), 180–200 (WLFA…ALLL), 237–257 (FLGI…ILPF), and 278–298 (AKGL…LLVM).

The protein belongs to the UbiA prenyltransferase family. Protoheme IX farnesyltransferase subfamily.

The protein resides in the cell inner membrane. The enzyme catalyses heme b + (2E,6E)-farnesyl diphosphate + H2O = Fe(II)-heme o + diphosphate. It participates in porphyrin-containing compound metabolism; heme O biosynthesis; heme O from protoheme: step 1/1. Converts heme B (protoheme IX) to heme O by substitution of the vinyl group on carbon 2 of heme B porphyrin ring with a hydroxyethyl farnesyl side group. This chain is Protoheme IX farnesyltransferase, found in Synechococcus sp. (strain CC9311).